The sequence spans 323 residues: tRNA U34 carboxymethyltransferase (323 aa).

Carboxy-S-adenosyl-L-methionine-binding positions include lysine 93, tryptophan 107, lysine 112, glycine 132, 154-156 (DPS), 182-183 (VE), methionine 197, tyrosine 201, and arginine 316.

The protein belongs to the class I-like SAM-binding methyltransferase superfamily. CmoB family. Homotetramer.

The catalysed reaction is carboxy-S-adenosyl-L-methionine + 5-hydroxyuridine(34) in tRNA = 5-carboxymethoxyuridine(34) in tRNA + S-adenosyl-L-homocysteine + H(+). In terms of biological role, catalyzes carboxymethyl transfer from carboxy-S-adenosyl-L-methionine (Cx-SAM) to 5-hydroxyuridine (ho5U) to form 5-carboxymethoxyuridine (cmo5U) at position 34 in tRNAs. This is tRNA U34 carboxymethyltransferase from Pseudoalteromonas atlantica (strain T6c / ATCC BAA-1087).